Here is a 240-residue protein sequence, read N- to C-terminus: ATP-dependent dethiobiotin synthetase BioD (240 aa).

Position 15–20 (15–20) interacts with ATP; that stretch reads EIGKTF. Threonine 19 provides a ligand contact to Mg(2+). Lysine 40 is an active-site residue. Residues aspartate 57, 118 to 121, and 178 to 179 contribute to the ATP site; these read EGVG and NR. Aspartate 57 and glutamate 118 together coordinate Mg(2+).

The protein belongs to the dethiobiotin synthetase family. In terms of assembly, homodimer. Mg(2+) is required as a cofactor.

The protein localises to the cytoplasm. It catalyses the reaction (7R,8S)-7,8-diammoniononanoate + CO2 + ATP = (4R,5S)-dethiobiotin + ADP + phosphate + 3 H(+). Its pathway is cofactor biosynthesis; biotin biosynthesis; biotin from 7,8-diaminononanoate: step 1/2. Its function is as follows. Catalyzes a mechanistically unusual reaction, the ATP-dependent insertion of CO2 between the N7 and N8 nitrogen atoms of 7,8-diaminopelargonic acid (DAPA, also called 7,8-diammoniononanoate) to form a ureido ring. In Burkholderia thailandensis (strain ATCC 700388 / DSM 13276 / CCUG 48851 / CIP 106301 / E264), this protein is ATP-dependent dethiobiotin synthetase BioD.